The following is a 304-amino-acid chain: N-carbamoyl-D-amino acid hydrolase (304 aa).

The CN hydrolase domain occupies 5 to 276 (MILAVGQQGP…DEVITAAVDL (272 aa)). Residues Glu47, Lys127, and Cys172 contribute to the active site.

Homotetramer.

The enzyme catalyses an N-carbamoyl-D-amino acid + H2O + 2 H(+) = a D-alpha-amino acid + NH4(+) + CO2. Its function is as follows. The enzyme catalyzes the hydrolysis of N-carbamoyl-D-amino acids to the corresponding which are useful intermediates in the preparation of beta-lactam antibiotics. Industrial production of beta-lactam antibiotics is now being developed using this enzyme. This is N-carbamoyl-D-amino acid hydrolase from Rhizobium radiobacter (Agrobacterium tumefaciens).